The primary structure comprises 212 residues: Small ribosomal subunit protein uS3 (212 aa).

The 69-residue stretch at 38 to 106 (IRKFVKKTLY…EFAIEVNEIR (69 aa)) folds into the KH type-2 domain.

The protein belongs to the universal ribosomal protein uS3 family. As to quaternary structure, part of the 30S ribosomal subunit. Forms a tight complex with proteins S10 and S14.

Its function is as follows. Binds the lower part of the 30S subunit head. Binds mRNA in the 70S ribosome, positioning it for translation. The sequence is that of Small ribosomal subunit protein uS3 from Nitratidesulfovibrio vulgaris (strain ATCC 29579 / DSM 644 / CCUG 34227 / NCIMB 8303 / VKM B-1760 / Hildenborough) (Desulfovibrio vulgaris).